The primary structure comprises 653 residues: 4-alpha-glucanotransferase (653 aa).

The active-site Nucleophile is E123. D214 (proton donor) is an active-site residue.

The protein belongs to the glycosyl hydrolase 57 family.

The catalysed reaction is Transfers a segment of a (1-&gt;4)-alpha-D-glucan to a new position in an acceptor, which may be glucose or a (1-&gt;4)-alpha-D-glucan.. The polypeptide is 4-alpha-glucanotransferase (Thermococcus kodakarensis (strain ATCC BAA-918 / JCM 12380 / KOD1) (Pyrococcus kodakaraensis (strain KOD1))).